Consider the following 140-residue polypeptide: Ribosome-binding factor A (140 aa).

The span at Asp-118–Thr-133 shows a compositional bias: basic and acidic residues. Residues Asp-118 to Glu-140 are disordered.

It belongs to the RbfA family. In terms of assembly, monomer. Binds 30S ribosomal subunits, but not 50S ribosomal subunits or 70S ribosomes.

It is found in the cytoplasm. Its function is as follows. One of several proteins that assist in the late maturation steps of the functional core of the 30S ribosomal subunit. Associates with free 30S ribosomal subunits (but not with 30S subunits that are part of 70S ribosomes or polysomes). Required for efficient processing of 16S rRNA. May interact with the 5'-terminal helix region of 16S rRNA. The protein is Ribosome-binding factor A of Shewanella woodyi (strain ATCC 51908 / MS32).